A 161-amino-acid polypeptide reads, in one-letter code: Regulator of ribonuclease activity A (161 aa).

It belongs to the RraA family. In terms of assembly, homotrimer. Binds to both RNA-binding sites in the C-terminal region of Rne and to RhlB.

The protein localises to the cytoplasm. Functionally, globally modulates RNA abundance by binding to RNase E (Rne) and regulating its endonucleolytic activity. Can modulate Rne action in a substrate-dependent manner by altering the composition of the degradosome. Modulates RNA-binding and helicase activities of the degradosome. In Salmonella choleraesuis (strain SC-B67), this protein is Regulator of ribonuclease activity A.